We begin with the raw amino-acid sequence, 172 residues long: Translation initiation factor IF-3 (172 aa).

Belongs to the IF-3 family. Monomer.

Its subcellular location is the cytoplasm. IF-3 binds to the 30S ribosomal subunit and shifts the equilibrium between 70S ribosomes and their 50S and 30S subunits in favor of the free subunits, thus enhancing the availability of 30S subunits on which protein synthesis initiation begins. The chain is Translation initiation factor IF-3 from Geobacter metallireducens (strain ATCC 53774 / DSM 7210 / GS-15).